Consider the following 388-residue polypeptide: F-box/kelch-repeat protein At3g17530 (388 aa).

The F-box domain maps to 1–50; the sequence is MMISDLPHDLESEILSRVPAKSLAKWKTTCKRWYALFRDPSFVKKNFDKA. 2 Kelch repeats span residues 163-208 and 336-383; these read CCYY…VSLK and RIYI…AEEN.

This is F-box/kelch-repeat protein At3g17530 from Arabidopsis thaliana (Mouse-ear cress).